A 1680-amino-acid chain; its full sequence is MEDSAPDAVAAAPSGTPKSKLETLPREDLIKFAKKQMMLLQKAKARCTELDKEVEELKSKPVDGGTDDIIKVLTERLDALLLEKAETEQQCLCLKKENVKMKQEVEDSVTKLEETHKEFEQSHRNYVKEIESCKNELMAVHSEHSKETAILQKELEEAVHKQVELREQLKSQSDSEDNVRKLQEEIQNITAAFEEQISCLEKKLEATSDEKQQEIIHLQKVIEDKAQHYQKDINTFQAEILQLRATHKEEVTELMSQIETSAKEHEAEINKLKENRVTQCEASENIPEKYQCESENLNEVASDASPESQNCSVALQEDPSAEQTVCDKVRQLEDSLKELESQHSILKDEVTYMNNLKLKLEMDAQHIKDEFFHEREDLEFKINELLLAKEEQGYVVEKLKYEREDLNRQLCCAVEQHNKEIQRLQEHHQKEVSELSETFISGSEKEKLALMFEIQGLKEQCENLQHEKQEVVLNYESLREMMEILQTELGESAGKISQEFETMKQQQASDVHELQQKLRSAFNEKDALLETVNRLQGENEKLLSQQELVPELESTIKNLQADNSMYLASLGQKDTMLQELEAKISSLAKEKDDFISKIKTSHEEMDDLHQKWEREQRLSVELREAAGQAAQHNSELRQRVSELTGKLDELVREKSQNDQSITVQMKTMTEDQEALSSKIKSLYEENNRLHSEKAQLSRDLEALQAQQDFAHKEHVAEFEKKLQLMVEERDDLNKLLENEQVQKSFVKTQLYEYLKQLRASILEENEEEDVVKLIQAVGESLVKVKEEEHNLVFEYDARVLELENKIKCLQEDSAVQCEELRTLVRDSEQEKILLRKELDAVTSAKEALQLDLLEMKNTNEKASLENQTLSTQVEELSQTLHSRNEVHDEKVLVIEHENLRLLLKQRESELQDVRAELILLKDSLEKSPSVKNDQLSLVKELEEKIESLEKESKDKDEKISKIKLVAVKAKKELDSNRKEAQTLREELESVRSEKDRLSASMKEFLQGAESYKSLLLEYDKQSEQLDVEKERAHNFERHIEDLTKQLRNSTCQYERLTSDNEDLLARIETLQANAKLLEAQILEVQKAKGVVEKELDAEKLQKEQKIKEHVSTVNELEELQLQFQKEKKQLQKTMQELELVKKDAQQTTLMNMEIADYERLMKELNQKLTNKNSTIEDLEQEMKIQKEKQETLQEEITSLQSSVQHYEEKNTKIKQLLVKTKKELADAKQAETDHLLLQASLKGELEASQQQVEVYKIQLAEMTSEKHKIHEHLKTSAEQHQRTLSAYQQRVVALQEESRAAKAEQAAVTSEFESYKVRVHNVLKQQKNKSVSQVETEGAKQEREHLEMLIDQLKIKLQDSQNSLQISVSEYQTLQAEHDTLLERHNRMLQETVTKEAELREKLCSVQSENTMMKSEHSQTMCQLTSQNEALRTSFRDQVRHLQDEHRKTVETLQHQLSKLEAQLFQLKSEPSTRSPASSHQPSKSLRERRTTDLPLLDMHTVAREEGEGMETTDSESVSSAGTHIQSLEQLLSSPDTKLERLAETSLWHNEFTKEELAEKLSSTTKSADHLNGLLRETEATNAILMEQIKLLKSEIRRLERNQEREKSVANLEYLKNVLLRFIFLKPGSERERLLPVIDTMLQLSPEEKGKLATVAQGEEESASRSSGWASYLHSWSGLR.

Met-1 carries the N-acetylmethionine modification. Residues 1-14 (MEDSAPDAVAAAPS) are compositionally biased toward low complexity. Disordered stretches follow at residues 1–23 (MEDS…KLET) and 1468–1522 (KSEP…SSAG). A coiled-coil region spans residues 31–1614 (KFAKKQMMLL…REKSVANLEY (1584 aa)). The segment covering 1469-1484 (SEPSTRSPASSHQPSK) has biased composition (polar residues). A phosphoserine mark is found at Ser-1475 and Ser-1479. Residues 1570-1609 (HLNGLLRETEATNAILMEQIKLLKSEIRRLERNQEREKSV) form a mediates interaction with RAB6A region. Positions 1570–1680 (HLNGLLRETE…SYLHSWSGLR (111 aa)) are mediates interaction with RAB9A. Residues 1605 to 1655 (REKSVANLEYLKNVLLRFIFLKPGSERERLLPVIDTMLQLSPEEKGKLATV) enclose the GRIP domain.

As to quaternary structure, homodimer. Interacts (via GRIP domain) with RAB6A (preferentially in its GTP-bound form). May interact (RAB6A-dependent) with ARL1; might be involved in GCC2 Golgi localization. Interacts (probably via GRIP domain) with RAB9A (preferentially in its GTP-bound form). Interacts with CLASP1 and CLASP2; recruits both proteins to membranes of the TGN. Interacts with STX16.

It is found in the cytoplasm. Its subcellular location is the golgi apparatus. It localises to the trans-Golgi network membrane. Functionally, golgin which probably tethers transport vesicles to the trans-Golgi network (TGN) and regulates vesicular transport between the endosomes and the Golgi. As a RAB9A effector it is involved in recycling of the mannose 6-phosphate receptor from the late endosomes to the TGN. May also play a role in transport between the recycling endosomes and the Golgi. Required for maintenance of the Golgi structure, it is involved in the biogenesis of noncentrosomal, Golgi-associated microtubules through recruitment of CLASP1 and CLASP2. The protein is GRIP and coiled-coil domain-containing protein 2 (Gcc2) of Mus musculus (Mouse).